A 441-amino-acid polypeptide reads, in one-letter code: ATP-dependent RNA helicase SUB2-1 (441 aa).

The span at 1 to 19 (MSHEGEEDLLEYSDNEQDI) shows a compositional bias: acidic residues. Residues 1-46 (MSHEGEEDLLEYSDNEQDIQVDASKAAEPSELDATTAEDASNGDAE) are disordered. A Q motif motif is present at residues 57–85 (TGFKDFLLKPELARAIIDCGFEHPSEVQQ). The Helicase ATP-binding domain occupies 88–263 (IPQSIHGTDV…RRFLQNPLEI (176 aa)). Residue 101-108 (AKSGLGKT) coordinates ATP. The short motif at 210–213 (DECD) is the DECD box element. In terms of domain architecture, Helicase C-terminal spans 291–436 (KLAQLLDDLE…EFPEEGIDPS (146 aa)).

The protein belongs to the DEAD box helicase family. DECD subfamily.

The protein localises to the nucleus. It catalyses the reaction ATP + H2O = ADP + phosphate + H(+). Functionally, ATP-binding RNA helicase involved in transcription elongation and required for the export of mRNA out of the nucleus. SUB2 also plays a role in pre-mRNA splicing and spliceosome assembly. May be involved in rDNA and telomeric silencing, and maintenance of genome integrity. The chain is ATP-dependent RNA helicase SUB2-1 (SUB2-1) from Vanderwaltozyma polyspora (strain ATCC 22028 / DSM 70294 / BCRC 21397 / CBS 2163 / NBRC 10782 / NRRL Y-8283 / UCD 57-17) (Kluyveromyces polysporus).